The following is a 260-amino-acid chain: Dehydrogenase/reductase SDR family member 4 (260 aa).

NADP(+) is bound at residue 14 to 38; that stretch reads IVTAATKGIGLAIAERLLDEGASVV. Ser-148 contacts substrate. Tyr-161 serves as the catalytic Proton acceptor. NADP(+) is bound at residue Lys-165.

It belongs to the short-chain dehydrogenases/reductases (SDR) family.

The enzyme catalyses a secondary alcohol + NADP(+) = a ketone + NADPH + H(+). In terms of biological role, catalyzes the reduction of isatin, 4-oxonon-2-enal, 9,10-phenanthrenequinone, menadione, 2,3-hexaenadione, 3,4-hexanedione and 2,3-heptanedione. In Caenorhabditis elegans, this protein is Dehydrogenase/reductase SDR family member 4.